Consider the following 425-residue polypeptide: Testicular acid phosphatase (425 aa).

An N-terminal signal peptide occupies residues 1 to 27 (MAEPGSQGHTVGPLLLLLLLLLPRALP). Topologically, residues 28–392 (EGPLLFVALV…EPASPPATVP (365 aa)) are extracellular. The active-site Nucleophile is the His-40. Cystine bridges form between Cys-158–Cys-378, Cys-213–Cys-311, and Cys-353–Cys-357. Asp-288 serves as the catalytic Proton donor. Residues 393 to 413 (LLAGAVAVLAVLSLGLGLLAW) traverse the membrane as a helical segment. At 414 to 425 (RPRCLRALGGTV) the chain is on the cytoplasmic side.

Belongs to the histidine acid phosphatase family. Homodimer. Glycosylated.

It localises to the membrane. The enzyme catalyses a phosphate monoester + H2O = an alcohol + phosphate. Its function is as follows. May dephosphorylate receptor tyrosine-protein kinase ERBB4 and inhibits its ligand-induced proteolytic cleavage. May play a role in odontogenesis. The polypeptide is Testicular acid phosphatase (Mus musculus (Mouse)).